We begin with the raw amino-acid sequence, 278 residues long: Small ribosomal subunit protein uS2 (278 aa).

A disordered region spans residues 235-278 (QRRKDHGEGGQQAAGGGRGQRDEINVYQGGRGGRGGGPRQQQAS). Composition is skewed to gly residues over residues 243–252 (GGQQAAGGGR) and 263–272 (GGRGGRGGGP).

This sequence belongs to the universal ribosomal protein uS2 family.

This Sorangium cellulosum (strain So ce56) (Polyangium cellulosum (strain So ce56)) protein is Small ribosomal subunit protein uS2.